The chain runs to 150 residues: SsrA-binding protein (150 aa).

Belongs to the SmpB family.

The protein resides in the cytoplasm. In terms of biological role, required for rescue of stalled ribosomes mediated by trans-translation. Binds to transfer-messenger RNA (tmRNA), required for stable association of tmRNA with ribosomes. tmRNA and SmpB together mimic tRNA shape, replacing the anticodon stem-loop with SmpB. tmRNA is encoded by the ssrA gene; the 2 termini fold to resemble tRNA(Ala) and it encodes a 'tag peptide', a short internal open reading frame. During trans-translation Ala-aminoacylated tmRNA acts like a tRNA, entering the A-site of stalled ribosomes, displacing the stalled mRNA. The ribosome then switches to translate the ORF on the tmRNA; the nascent peptide is terminated with the 'tag peptide' encoded by the tmRNA and targeted for degradation. The ribosome is freed to recommence translation, which seems to be the essential function of trans-translation. The chain is SsrA-binding protein from Thermotoga maritima (strain ATCC 43589 / DSM 3109 / JCM 10099 / NBRC 100826 / MSB8).